A 96-amino-acid chain; its full sequence is MEVTDVRLRRVNTEGRMRAIASITLDQEFVVHDIRVIDGNNGLFVAMPSKRTPDGEFRDIAHPINSGTRSKIQEAVLAEYQKAGEDEVNYEEAGAS.

This sequence belongs to the SpoVG family.

Could be involved in septation. The chain is Putative septation protein SpoVG from Oceanobacillus iheyensis (strain DSM 14371 / CIP 107618 / JCM 11309 / KCTC 3954 / HTE831).